Here is a 230-residue protein sequence, read N- to C-terminus: V-type proton ATPase subunit E (230 aa).

This sequence belongs to the V-ATPase E subunit family. As to quaternary structure, V-ATPase is a heteromultimeric enzyme composed of a peripheral catalytic V1 complex (components A to H) attached to an integral membrane V0 proton pore complex (components: a, c, c', c'', d, e, f and VOA1).

The protein localises to the vacuole membrane. Its function is as follows. Subunit of the V1 complex of vacuolar(H+)-ATPase (V-ATPase), a multisubunit enzyme composed of a peripheral complex (V1) that hydrolyzes ATP and a membrane integral complex (V0) that translocates protons. V-ATPase is responsible for acidifying and maintaining the pH of intracellular compartments. This chain is V-type proton ATPase subunit E, found in Neurospora crassa (strain ATCC 24698 / 74-OR23-1A / CBS 708.71 / DSM 1257 / FGSC 987).